A 563-amino-acid chain; its full sequence is O-fucosyltransferase 14 (563 aa).

The span at 1–16 (MVKVSSSTTSSSSSSS) shows a compositional bias: low complexity. Positions 1–25 (MVKVSSSTTSSSSSSSPDEESDLQN) are disordered. Residues 73-93 (IFIFLPIVIILIYLSTDFSNY) form a helical; Signal-anchor for type II membrane protein membrane-spanning segment. Asn-135, Asn-140, and Asn-339 each carry an N-linked (GlcNAc...) asparagine glycan. Substrate-binding positions include 412 to 414 (HFR) and 528 to 529 (TF).

Belongs to the glycosyltransferase GT106 family.

The protein resides in the membrane. It participates in glycan metabolism. The polypeptide is O-fucosyltransferase 14 (Arabidopsis thaliana (Mouse-ear cress)).